The chain runs to 118 residues: Large ribosomal subunit protein bL20 (118 aa).

The protein belongs to the bacterial ribosomal protein bL20 family.

In terms of biological role, binds directly to 23S ribosomal RNA and is necessary for the in vitro assembly process of the 50S ribosomal subunit. It is not involved in the protein synthesizing functions of that subunit. The sequence is that of Large ribosomal subunit protein bL20 (rplT) from Buchnera aphidicola subsp. Acyrthosiphon pisum (strain APS) (Acyrthosiphon pisum symbiotic bacterium).